The primary structure comprises 147 residues: MMNILLINGPNLNLLGTREPEIYGNKTLSDIEKDLTKVAKEKSINLECFQSNHEGEIVDKIQESVKSIQGILINAGAFTHTSISIRDALIGSKIPFVELHISNIFSREDFRKESFLTDKAIGIISGFGISSYSLALEGIIGYLSIKD.

Tyr-23 serves as the catalytic Proton acceptor. Positions 74, 80, and 87 each coordinate substrate. The active-site Proton donor is the His-100. Substrate-binding positions include 101–102 and Arg-111; that span reads IS.

This sequence belongs to the type-II 3-dehydroquinase family. In terms of assembly, homododecamer.

It carries out the reaction 3-dehydroquinate = 3-dehydroshikimate + H2O. The protein operates within metabolic intermediate biosynthesis; chorismate biosynthesis; chorismate from D-erythrose 4-phosphate and phosphoenolpyruvate: step 3/7. Functionally, catalyzes a trans-dehydration via an enolate intermediate. This chain is 3-dehydroquinate dehydratase, found in Prochlorococcus marinus (strain MIT 9301).